The chain runs to 448 residues: Glucose-6-phosphate isomerase (448 aa).

Residue Glu291 is the Proton donor of the active site. Active-site residues include His312 and Lys425.

It belongs to the GPI family.

It is found in the cytoplasm. It carries out the reaction alpha-D-glucose 6-phosphate = beta-D-fructose 6-phosphate. Its pathway is carbohydrate biosynthesis; gluconeogenesis. It functions in the pathway carbohydrate degradation; glycolysis; D-glyceraldehyde 3-phosphate and glycerone phosphate from D-glucose: step 2/4. Its function is as follows. Catalyzes the reversible isomerization of glucose-6-phosphate to fructose-6-phosphate. The chain is Glucose-6-phosphate isomerase from Symbiobacterium thermophilum (strain DSM 24528 / JCM 14929 / IAM 14863 / T).